The sequence spans 540 residues: 2,3-bisphosphoglycerate-independent phosphoglycerate mutase (540 aa).

2 residues coordinate Mn(2+): aspartate 13 and serine 63. The active-site Phosphoserine intermediate is serine 63. Substrate is bound by residues histidine 124, 154–155, arginine 186, arginine 192, 262–265, and lysine 356; these read RD and RPDR. Aspartate 423, histidine 427, aspartate 464, histidine 465, and histidine 483 together coordinate Mn(2+).

The protein belongs to the BPG-independent phosphoglycerate mutase family. In terms of assembly, monomer. Mn(2+) is required as a cofactor.

The enzyme catalyses (2R)-2-phosphoglycerate = (2R)-3-phosphoglycerate. It functions in the pathway carbohydrate degradation; glycolysis; pyruvate from D-glyceraldehyde 3-phosphate: step 3/5. In terms of biological role, catalyzes the interconversion of 2-phosphoglycerate and 3-phosphoglycerate. The protein is 2,3-bisphosphoglycerate-independent phosphoglycerate mutase of Chloroflexus aurantiacus (strain ATCC 29366 / DSM 635 / J-10-fl).